A 55-amino-acid polypeptide reads, in one-letter code: Large ribosomal subunit protein bL33 (55 aa).

Belongs to the bacterial ribosomal protein bL33 family.

In Polaromonas sp. (strain JS666 / ATCC BAA-500), this protein is Large ribosomal subunit protein bL33.